A 1604-amino-acid polypeptide reads, in one-letter code: Ubiquitin carboxyl-terminal hydrolase 32 (1604 aa).

EF-hand domains are found at residues 91-126 (KDEE…VDGK), 228-263 (IRPS…CCRG), and 264-299 (PLAE…LLEV). 9 residues coordinate Ca(2+): Asp-241, Asn-243, Asp-245, His-247, Glu-252, Asp-277, Asp-279, Asp-281, and Glu-288. The region spanning 369–585 (ATPEEEGQII…SNLALPRPVI (217 aa)) is the DUSP domain. The USP domain occupies 734–1567 (TGLSNLGNTC…SAYILFYEQQ (834 aa)). The active-site Nucleophile is the Cys-743. Tyr-1173 carries the phosphotyrosine modification. A Phosphoserine modification is found at Ser-1350. The tract at residues 1353–1432 (EEDVLLSKSP…SKENLDTSKE (80 aa)) is disordered. Polar residues predominate over residues 1360 to 1370 (KSPSSLSANVT). The span at 1371 to 1399 (SSPKGSPSSSRKSGASCPSSKNSSPNSSP) shows a compositional bias: low complexity. Ser-1372 and Ser-1376 each carry phosphoserine. Over residues 1415–1424 (GSKNKLSNSK) the composition is skewed to polar residues. A Phosphoserine modification is found at Ser-1454. The segment at 1484–1504 (SNGQLGNHSEEDSTDDQREET) is disordered. The span at 1491 to 1504 (HSEEDSTDDQREET) shows a compositional bias: basic and acidic residues. The active-site Proton acceptor is His-1526. Ser-1588 carries the phosphoserine modification. Cys-1601 carries the post-translational modification Cysteine methyl ester. The S-farnesyl cysteine moiety is linked to residue Cys-1601. Positions 1602–1604 (VLQ) are cleaved as a propeptide — removed in mature form.

The protein belongs to the peptidase C19 family.

The protein resides in the golgi apparatus membrane. It catalyses the reaction Thiol-dependent hydrolysis of ester, thioester, amide, peptide and isopeptide bonds formed by the C-terminal Gly of ubiquitin (a 76-residue protein attached to proteins as an intracellular targeting signal).. Functionally, deubiquitinase that can remove conjugated ubiquitin from target proteins, such as RAB7A and LAMTOR1. Acts as a positive regulator of the mTORC1 signaling by mediating deubiquitination of LAMTOR1, thereby promoting the association between LAMTOR1 and the lysosomal V-ATPase complex and subsequent activation of the mTORC1 complex. This Mus musculus (Mouse) protein is Ubiquitin carboxyl-terminal hydrolase 32.